The sequence spans 319 residues: Bidirectional sugar transporter SWEET15 (319 aa).

Residues 1–10 are Extracellular-facing; it reads MAFMSMERST. The chain crosses the membrane as a helical span at residues 11–31; that stretch reads WAFTFGILGNLISLMVFLSPL. Residues 13-99 enclose the MtN3/slv 1 domain; that stretch reads FTFGILGNLI…AMYLAYAPKS (87 aa). Residues 32–50 are Cytoplasmic-facing; sequence PTFYRVYRKKSTEGFQSTP. A helical membrane pass occupies residues 51–71; the sequence is YVVTLFSCMLWMYYAFVKSGA. A topological domain (extracellular) is located at residue E72. A helical membrane pass occupies residues 73 to 93; it reads LLVTINGVGCVIETVYLAMYL. The Cytoplasmic portion of the chain corresponds to 94-106; the sequence is AYAPKSARMLTAK. A helical membrane pass occupies residues 107 to 127; it reads MLLGLNIGLFGVIALVTLLLS. At 128–134 the chain is on the extracellular side; the sequence is RGELRVH. Residues 135 to 155 traverse the membrane as a helical segment; sequence VLGWICVAVSLSVFAAPLSII. Residues 135-219 form the MtN3/slv 2 domain; sequence VLGWICVAVS…ALYMAYRSKK (85 aa). Residues 156-167 are Cytoplasmic-facing; the sequence is RLVIRTKSVEFM. Residues 168–188 form a helical membrane-spanning segment; sequence PFSLSFFLVLSAVIWFLYGLL. Residues 189 to 191 are Extracellular-facing; sequence KKD. A helical transmembrane segment spans residues 192–212; sequence VFVALPNVLGFVFGVAQMALY. Topologically, residues 213–319 are cytoplasmic; the sequence is MAYRSKKPLV…KPDMAIVVEV (107 aa).

It belongs to the SWEET sugar transporter family. As to quaternary structure, forms homooligomers and/or heterooligomers.

The protein resides in the cell membrane. Mediates both low-affinity uptake and efflux of sugar across the plasma membrane. In terms of biological role, confers blight susceptibility. Confers TAL effector-mediated susceptibility to Xanthomonas oryzae pv. oryzae. This Oryza sativa subsp. japonica (Rice) protein is Bidirectional sugar transporter SWEET15 (SWEET15).